We begin with the raw amino-acid sequence, 70 residues long: Large ribosomal subunit protein bL31 (70 aa).

Residues C16, C18, C37, and C40 each contribute to the Zn(2+) site.

The protein belongs to the bacterial ribosomal protein bL31 family. Type A subfamily. Part of the 50S ribosomal subunit. Requires Zn(2+) as cofactor.

Its function is as follows. Binds the 23S rRNA. This Shewanella oneidensis (strain ATCC 700550 / JCM 31522 / CIP 106686 / LMG 19005 / NCIMB 14063 / MR-1) protein is Large ribosomal subunit protein bL31.